A 204-amino-acid chain; its full sequence is Large ribosomal subunit protein eL15 (204 aa).

This sequence belongs to the eukaryotic ribosomal protein eL15 family.

The chain is Large ribosomal subunit protein eL15 (RpL15) from Chironomus tentans (Midge).